The chain runs to 386 residues: MSALEKSMHLGRLPSRPPLPGSGGSQSGAKMRMGPGRKRDFTPVPWSQYFESMEDVEVENETGKDTFRVYKSGSEGPVLLLLHGGGHSALSWAVFTAAIISRVQCRIVALDLRGHGETKVKNSEDLSAETMAKDVGNVVEAMYGDLPPPVMLIGHSMGGAIAVHTAAANLVPSLLGLCMIDVVEGTAMDALNSMQNFLRGRPKTFKSLENAIEWSVKSGQIRNLESARVSMVGQVKQCEGITSPEGSKSIVEGIIEEEEEDEEGSESVNKRKKEDDMETKKDHPYTWRIELAKTEKYWDGWFRGLSNLFLSCPIPKLLLLAGVDRLDKDLTIGQMQGKFQMQVLPQCGHAVHEDAPDKVAEAVATFLIRHRFAEPIGGFQCVFPGC.

The segment at 1 to 38 (MSALEKSMHLGRLPSRPPLPGSGGSQSGAKMRMGPGRK) is disordered. Serine 15 carries the phosphoserine modification. Position 16 is an asymmetric dimethylarginine; alternate (arginine 16). At arginine 16 the chain carries Omega-N-methylarginine; alternate. Catalysis depends on residues serine 156 and aspartate 181. Residues 255–265 (IEEEEEDEEGS) show a composition bias toward acidic residues. Residues 255-280 (IEEEEEDEEGSESVNKRKKEDDMETK) form a disordered region. The span at 268 to 280 (VNKRKKEDDMETK) shows a compositional bias: basic and acidic residues. Histidine 349 is an active-site residue.

This sequence belongs to the AB hydrolase superfamily. As to quaternary structure, binds PPP2CA and PPP2CB. Phosphorylated by SIK1 following increases in intracellular sodium, leading to dissociation from the protein phosphatase 2A (PP2A) complex and subsequent dephosphorylation of sodium/potassium-transporting ATPase ATP1A1. Ubiquitous. Highly expressed in testis and brain.

The catalysed reaction is [phosphatase 2A protein]-C-terminal L-leucine methyl ester + H2O = [phosphatase 2A protein]-C-terminal L-leucine + methanol + H(+). Functionally, demethylates proteins that have been reversibly carboxymethylated. Demethylates PPP2CB (in vitro) and PPP2CA. Binding to PPP2CA displaces the manganese ion and inactivates the enzyme. This is Protein phosphatase methylesterase 1 (Ppme1) from Mus musculus (Mouse).